The following is a 545-amino-acid chain: CTP synthase (545 aa).

The interval 1–266 (MTTNYIFVTG…DDYICKRFSL (266 aa)) is amidoligase domain. Serine 14 lines the CTP pocket. Serine 14 lines the UTP pocket. Residues 15–20 (SLGKGI) and aspartate 72 each bind ATP. Mg(2+) contacts are provided by aspartate 72 and glutamate 140. CTP is bound by residues 147 to 149 (DIE), 187 to 192 (KTKPTQ), and lysine 223. UTP-binding positions include 187–192 (KTKPTQ) and lysine 223. 239–241 (KDV) provides a ligand contact to ATP. Residues 291–542 (TIGMVGKYIE…VKAASEYQKR (252 aa)) enclose the Glutamine amidotransferase type-1 domain. Glycine 352 provides a ligand contact to L-glutamine. The active-site Nucleophile; for glutamine hydrolysis is the cysteine 379. L-glutamine is bound by residues 380-383 (LGMQ), glutamate 403, and arginine 470. Active-site residues include histidine 515 and glutamate 517.

This sequence belongs to the CTP synthase family. Homotetramer.

It catalyses the reaction UTP + L-glutamine + ATP + H2O = CTP + L-glutamate + ADP + phosphate + 2 H(+). The catalysed reaction is L-glutamine + H2O = L-glutamate + NH4(+). The enzyme catalyses UTP + NH4(+) + ATP = CTP + ADP + phosphate + 2 H(+). The protein operates within pyrimidine metabolism; CTP biosynthesis via de novo pathway; CTP from UDP: step 2/2. Its activity is regulated as follows. Allosterically activated by GTP, when glutamine is the substrate; GTP has no effect on the reaction when ammonia is the substrate. The allosteric effector GTP functions by stabilizing the protein conformation that binds the tetrahedral intermediate(s) formed during glutamine hydrolysis. Inhibited by the product CTP, via allosteric rather than competitive inhibition. In terms of biological role, catalyzes the ATP-dependent amination of UTP to CTP with either L-glutamine or ammonia as the source of nitrogen. Regulates intracellular CTP levels through interactions with the four ribonucleotide triphosphates. This chain is CTP synthase, found in Citrobacter koseri (strain ATCC BAA-895 / CDC 4225-83 / SGSC4696).